We begin with the raw amino-acid sequence, 65 residues long: Large ribosomal subunit protein uL29 (65 aa).

Belongs to the universal ribosomal protein uL29 family.

The chain is Large ribosomal subunit protein uL29 from Buchnera aphidicola subsp. Baizongia pistaciae (strain Bp).